A 529-amino-acid polypeptide reads, in one-letter code: CTP synthase (529 aa).

Positions 1 to 266 (MTKYIIVTGG…TKKIFNKLGL (266 aa)) are amidoligase domain. S13 is a CTP binding site. S13 contacts UTP. 14-19 (SVGKGT) provides a ligand contact to ATP. Y54 contacts L-glutamine. D71 contributes to the ATP binding site. Mg(2+) is bound by residues D71 and E141. CTP is bound by residues 148-150 (DIE), 187-192 (KTKPLQ), and K223. UTP-binding positions include 187–192 (KTKPLQ) and K223. A Glutamine amidotransferase type-1 domain is found at 291–529 (KIALVGKYTK…FLNFLSVASA (239 aa)). G354 contacts L-glutamine. The Nucleophile; for glutamine hydrolysis role is filled by C381. L-glutamine-binding positions include 382–385 (FGMQ), E405, and R462. Active-site residues include H506 and E508.

This sequence belongs to the CTP synthase family. As to quaternary structure, homotetramer.

The enzyme catalyses UTP + L-glutamine + ATP + H2O = CTP + L-glutamate + ADP + phosphate + 2 H(+). It catalyses the reaction L-glutamine + H2O = L-glutamate + NH4(+). It carries out the reaction UTP + NH4(+) + ATP = CTP + ADP + phosphate + 2 H(+). It participates in pyrimidine metabolism; CTP biosynthesis via de novo pathway; CTP from UDP: step 2/2. With respect to regulation, allosterically activated by GTP, when glutamine is the substrate; GTP has no effect on the reaction when ammonia is the substrate. The allosteric effector GTP functions by stabilizing the protein conformation that binds the tetrahedral intermediate(s) formed during glutamine hydrolysis. Inhibited by the product CTP, via allosteric rather than competitive inhibition. Functionally, catalyzes the ATP-dependent amination of UTP to CTP with either L-glutamine or ammonia as the source of nitrogen. Regulates intracellular CTP levels through interactions with the four ribonucleotide triphosphates. This chain is CTP synthase, found in Sulfolobus acidocaldarius (strain ATCC 33909 / DSM 639 / JCM 8929 / NBRC 15157 / NCIMB 11770).